The following is a 213-amino-acid chain: Virion protein US10 homolog (213 aa).

This sequence belongs to the herpesviridae US10 family. Post-translationally, phosphorylated.

It is found in the virion tegument. Its subcellular location is the host nucleus matrix. This Gallid herpesvirus 2 (strain GA) (GaHV-2) protein is Virion protein US10 homolog (US639).